The primary structure comprises 29 residues: GIPCAESCVYIPCLTSAGCSCKSKVCYRN.

3 disulfide bridges follow: C4–C19, C8–C21, and C13–C26.

In terms of processing, this is a cyclic peptide. Contains 3 disulfide bonds.

Probably participates in a plant defense mechanism. This is Cyclotide mra2 from Melicytus ramiflorus (Whitey wood).